The chain runs to 402 residues: Argininosuccinate synthase (402 aa).

Residue 7–15 (LYSGGLDTS) coordinates ATP. Tyrosine 83 is a binding site for L-citrulline. Glycine 113 serves as a coordination point for ATP. L-aspartate contacts are provided by threonine 115, asparagine 119, and aspartate 120. An L-citrulline-binding site is contributed by asparagine 119. The L-citrulline site is built by arginine 123, serine 169, serine 178, glutamate 253, and tyrosine 265.

It belongs to the argininosuccinate synthase family. Type 1 subfamily. Homotetramer.

The protein localises to the cytoplasm. The catalysed reaction is L-citrulline + L-aspartate + ATP = 2-(N(omega)-L-arginino)succinate + AMP + diphosphate + H(+). Its pathway is amino-acid biosynthesis; L-arginine biosynthesis; L-arginine from L-ornithine and carbamoyl phosphate: step 2/3. The protein is Argininosuccinate synthase of Thermoplasma acidophilum (strain ATCC 25905 / DSM 1728 / JCM 9062 / NBRC 15155 / AMRC-C165).